The primary structure comprises 83 residues: RNA-binding protein Hfq (83 aa).

Residues 10-69 enclose the Sm domain; the sequence is DPFLNALRREHVPVSIYLVNGIKLQGQIESFDQYVVLLRNTVTQMVYKHAISTIVPGRAV.

It belongs to the Hfq family. In terms of assembly, homohexamer.

Functionally, RNA chaperone that binds small regulatory RNA (sRNAs) and mRNAs to facilitate mRNA translational regulation in response to envelope stress, environmental stress and changes in metabolite concentrations. Also binds with high specificity to tRNAs. The chain is RNA-binding protein Hfq from Acidovorax ebreus (strain TPSY) (Diaphorobacter sp. (strain TPSY)).